A 513-amino-acid chain; its full sequence is ATP synthase subunit beta (513 aa).

Residues 1–29 (MATAPATEKKAPAKKAAAPKAAAPKKAAA) are disordered. Low complexity predominate over residues 14–29 (KKAAAPKAAAPKKAAA). 186-193 (GGAGVGKT) provides a ligand contact to ATP.

This sequence belongs to the ATPase alpha/beta chains family. In terms of assembly, F-type ATPases have 2 components, CF(1) - the catalytic core - and CF(0) - the membrane proton channel. CF(1) has five subunits: alpha(3), beta(3), gamma(1), delta(1), epsilon(1). CF(0) has three main subunits: a(1), b(2) and c(9-12). The alpha and beta chains form an alternating ring which encloses part of the gamma chain. CF(1) is attached to CF(0) by a central stalk formed by the gamma and epsilon chains, while a peripheral stalk is formed by the delta and b chains.

Its subcellular location is the cell inner membrane. It catalyses the reaction ATP + H2O + 4 H(+)(in) = ADP + phosphate + 5 H(+)(out). Functionally, produces ATP from ADP in the presence of a proton gradient across the membrane. The catalytic sites are hosted primarily by the beta subunits. This is ATP synthase subunit beta from Sphingopyxis alaskensis (strain DSM 13593 / LMG 18877 / RB2256) (Sphingomonas alaskensis).